We begin with the raw amino-acid sequence, 99 residues long: uncharacterized protein (99 aa).

The chain crosses the membrane as a helical span at residues Leu-6–Ile-26. The 48-residue stretch at Lys-48 to Phe-95 folds into the LysM domain.

The protein resides in the secreted. The protein localises to the cell wall. Its subcellular location is the membrane. This is an uncharacterized protein from Bacillus subtilis (strain 168).